A 144-amino-acid chain; its full sequence is D-aminoacyl-tRNA deacylase (144 aa).

Positions 136 to 137 match the Gly-cisPro motif, important for rejection of L-amino acids motif; it reads GP.

The protein belongs to the DTD family. Homodimer.

The protein localises to the cytoplasm. It catalyses the reaction glycyl-tRNA(Ala) + H2O = tRNA(Ala) + glycine + H(+). The enzyme catalyses a D-aminoacyl-tRNA + H2O = a tRNA + a D-alpha-amino acid + H(+). Its function is as follows. An aminoacyl-tRNA editing enzyme that deacylates mischarged D-aminoacyl-tRNAs. Also deacylates mischarged glycyl-tRNA(Ala), protecting cells against glycine mischarging by AlaRS. Acts via tRNA-based rather than protein-based catalysis; rejects L-amino acids rather than detecting D-amino acids in the active site. By recycling D-aminoacyl-tRNA to D-amino acids and free tRNA molecules, this enzyme counteracts the toxicity associated with the formation of D-aminoacyl-tRNA entities in vivo and helps enforce protein L-homochirality. The polypeptide is D-aminoacyl-tRNA deacylase (Actinobacillus succinogenes (strain ATCC 55618 / DSM 22257 / CCUG 43843 / 130Z)).